Consider the following 186-residue polypeptide: Lipid A palmitoyltransferase PagP (186 aa).

An N-terminal signal peptide occupies residues 1-25 (MNVSKYVAIFFFVFIQLISVGKVFA). Catalysis depends on residues histidine 58, aspartate 101, and serine 102.

Belongs to the lipid A palmitoyltransferase family. In terms of assembly, homodimer.

It is found in the cell outer membrane. It carries out the reaction lipid A (E. coli) + a 1-hexadecanoyl-2-acyl-sn-glycero-3-phosphocholine = hepta-acyl lipid A (E. coli) + a 2-acyl-sn-glycero-3-phosphocholine. The enzyme catalyses lipid IIA + a 1-hexadecanoyl-2-acyl-sn-glycero-3-phosphocholine = lipid IIB + a 2-acyl-sn-glycero-3-phosphocholine. The catalysed reaction is lipid IVA (E. coli) + a 1-hexadecanoyl-2-acyl-sn-glycero-3-phosphocholine = lipid IVB (E. coli) + a 2-acyl-sn-glycero-3-phosphocholine. Transfers a palmitate residue from the sn-1 position of a phospholipid to the N-linked hydroxymyristate on the proximal unit of lipid A or its precursors. The protein is Lipid A palmitoyltransferase PagP of Escherichia coli O6:H1 (strain CFT073 / ATCC 700928 / UPEC).